Consider the following 1480-residue polypeptide: Cystic fibrosis transmembrane conductance regulator (1480 aa).

The Cytoplasmic segment spans residues 1–77 (MQRSPLEKAS…KLINALRRCF (77 aa)). A helical membrane pass occupies residues 78–98 (FWRFMFYGILLYLGEVTKAVQ). Residues 81-365 (FMFYGILLYL…WAVQTWYDSL (285 aa)) form the ABC transmembrane type-1 1 domain. At 99-122 (PLLLGRIIASYDPDNKTERSIAIY) the chain is on the extracellular side. The helical transmembrane segment at 123–146 (LGIGLCLLFIVRTLLLHPAIFGLH) threads the bilayer. At 147 to 195 (HIGMQMRIAMFSLIYKKTLKLSSRVLDKISIGQLVSLLSNNLNKFDEGL) the chain is on the cytoplasmic side. Residues 196–216 (ALAHFVWIAPLQVALLMGLIW) form a helical membrane-spanning segment. At 217–222 (ELLQAS) the chain is on the extracellular side. A helical membrane pass occupies residues 223 to 243 (AFCGLGFLIVLALFQAGLGRM). Residues 244-298 (MMKYRDQRAGKINERLVITSEMIENIQSVKAYCWEEAMEKMIENLRQTELKLTRK) lie on the Cytoplasmic side of the membrane. A helical transmembrane segment spans residues 299-319 (AAYVRYFNSSAFFFSGFFVVF). Residues 320–339 (LSVLPYALIKGIVLRKIFTT) are Extracellular-facing. The helical transmembrane segment at 340–358 (ISFCIVLRMAVTRQFPWAV) threads the bilayer. Topologically, residues 359 to 858 (QTWYDSLGAI…YLRYITLHKS (500 aa)) are cytoplasmic. Residues tryptophan 401, serine 434, 458–465 (GSTGAGKT), and glutamine 493 each bind ATP. Positions 423–646 (NGDDNLFFSN…RPDFSSKLMG (224 aa)) constitute an ABC transporter 1 domain. A lipid anchor (S-palmitoyl cysteine) is attached at cysteine 524. Serine 549 and serine 660 each carry phosphoserine. Residues 654–831 (SSERRNSILT…EEINEEDLKE (178 aa)) form a disordered R region region. Serine 670 is modified (phosphoserine; by PKA). Phosphoserine is present on serine 686. Lysine 688 is covalently cross-linked (Glycyl lysine isopeptide (Lys-Gly) (interchain with G-Cter in ubiquitin)). 2 positions are modified to phosphoserine: serine 700 and serine 712. At threonine 717 the chain carries Phosphothreonine. 6 positions are modified to phosphoserine: serine 737, serine 753, serine 768, serine 790, serine 795, and serine 813. A helical transmembrane segment spans residues 859 to 879 (LIFVLIWCLVIFLAEVAASLV). The region spanning 859-1155 (LIFVLIWCLV…AVNSSIDVDS (297 aa)) is the ABC transmembrane type-1 2 domain. Topologically, residues 880–918 (VLWFLGNTPFQDKGNSTYSRNNSYAVIITNTSSYYVFYI) are extracellular. Residues asparagine 894, asparagine 900, and asparagine 909 are each glycosylated (N-linked (GlcNAc...) asparagine). A discontinuously helical transmembrane segment spans residues 919–939 (YVGVADTLLALGFFRGLPLVH). Topologically, residues 940–990 (TLITVSKILHHKMLHSVLQAPMSTLNTLKAGGILNRFSKDIAILDDLLPLT) are cytoplasmic. A helical membrane pass occupies residues 991-1011 (IFDFIQLLLIVIGAIAVVSVL). Over 1012–1013 (QP) the chain is Extracellular. The helical transmembrane segment at 1014-1034 (YILLATVPVIAAFILLRAYFL) threads the bilayer. Residues 1035–1095 (QTSQQLKQLE…TANWFLYLAT (61 aa)) lie on the Cytoplasmic side of the membrane. A helical transmembrane segment spans residues 1096–1116 (LRWFQMRIEIIFVIFFIAVTF). Residues 1117-1130 (ISILTTGEGEGTVG) lie on the Extracellular side of the membrane. A helical membrane pass occupies residues 1131 to 1151 (IILTLAMNIMSTLQWAVNSSI). Over 1152–1480 (DVDSLMRSVS…TEEEVQETRL (329 aa)) the chain is Cytoplasmic. The ABC transporter 2 domain maps to 1210–1443 (MTIKDLTAKY…KSLFQQAISH (234 aa)). ATP-binding positions include tyrosine 1219 and 1244-1251 (GRTGSGKS). The tract at residues 1386 to 1480 (RALKQAFADC…TEEEVQETRL (95 aa)) is interaction with GORASP2. Residue cysteine 1395 is the site of S-palmitoyl cysteine attachment. Residues serine 1444 and serine 1456 each carry the phosphoserine modification. Residues 1452-1480 (HRNSSKYKSPPQIASLKEETEEEVQETRL) form a disordered region. Positions 1470–1480 (ETEEEVQETRL) are enriched in acidic residues. A PDZ-binding motif is present at residues 1478-1480 (TRL).

It belongs to the ABC transporter superfamily. ABCC family. CFTR transporter (TC 3.A.1.202) subfamily. As to quaternary structure, monomer; does not require oligomerization for channel activity. May form oligomers in the membrane. Interacts with SLC26A3, SLC26A6 and NHERF1. Interacts with SHANK2. Interacts with MYO6. Interacts (via C-terminus) with GOPC (via PDZ domain); this promotes CFTR internalization and thereby decreases channel activity. Interacts with SLC4A7 through NHERF1. Found in a complex with MYO5B and RAB11A. Interacts with ANO1. Interacts with SLC26A8. Interacts with AHCYL1; the interaction increases CFTR activity. Interacts with CSE1L. The core-glycosylated form interacts with GORASP2 (via PDZ GRASP-type 1 domain) in respone to ER stress. Interacts with MARCHF2; the interaction leads to CFTR ubiqtuitination and degradation. Interacts with ADGRG2. N-glycosylated. In terms of processing, phosphorylated; cAMP treatment promotes phosphorylation and activates the channel. Dephosphorylation decreases the ATPase activity (in vitro). Phosphorylation at PKA sites activates the channel. Phosphorylation at PKC sites enhances the response to phosphorylation by PKA. Phosphorylated by AMPK; this inhibits channel activity. Post-translationally, ubiquitinated, leading to its degradation in the lysosome. Deubiquitination by USP10 in early endosomes enhances its endocytic recycling to the cell membrane. Ubiquitinated by RNF185 during ER stress. Ubiquitinated by MARCHF2.

The protein localises to the apical cell membrane. Its subcellular location is the early endosome membrane. It localises to the cell membrane. It is found in the recycling endosome membrane. The protein resides in the endoplasmic reticulum membrane. The protein localises to the nucleus. The enzyme catalyses ATP + H2O + closed Cl(-) channel = ADP + phosphate + open Cl(-) channel.. It catalyses the reaction chloride(in) = chloride(out). The catalysed reaction is hydrogencarbonate(in) = hydrogencarbonate(out). It carries out the reaction ATP + H2O = ADP + phosphate + H(+). Functionally, epithelial ion channel that plays an important role in the regulation of epithelial ion and water transport and fluid homeostasis. Mediates the transport of chloride ions across the cell membrane. Possesses an intrinsic ATPase activity and utilizes ATP to gate its channel; the passive flow of anions through the channel is gated by cycles of ATP binding and hydrolysis by the ATP-binding domains. The ion channel is also permeable to HCO(3)(-); selectivity depends on the extracellular chloride concentration. Exerts its function also by modulating the activity of other ion channels and transporters. Contributes to the regulation of the pH and the ion content of the epithelial fluid layer. Modulates the activity of the epithelial sodium channel (ENaC) complex, in part by regulating the cell surface expression of the ENaC complex. May regulate bicarbonate secretion and salvage in epithelial cells by regulating the transporter SLC4A7. Can inhibit the chloride channel activity of ANO1. Plays a role in the chloride and bicarbonate homeostasis during sperm epididymal maturation and capacitation. The protein is Cystic fibrosis transmembrane conductance regulator of Ateles geoffroyi (Black-handed spider monkey).